The primary structure comprises 431 residues: Elongation factor 1-gamma (431 aa).

Positions 2 to 84 (VKGTLYTYPE…LLANEQLRGG (83 aa)) constitute a GST N-terminal domain. The 127-residue stretch at 86 to 212 (CPFVQAQVQQ…YKLCEKALVF (127 aa)) folds into the GST C-terminal domain. The tract at residues 223–261 (KTGAAKPQQQAQQQKQEKKPKEKKEAPKKAAEPAEELDA) is disordered. Residues 226 to 236 (AAKPQQQAQQQ) are compositionally biased toward low complexity. A compositionally biased stretch (basic and acidic residues) spans 237 to 254 (KQEKKPKEKKEAPKKAAE). The 160-residue stretch at 272 to 431 (SKDPFDALPK…RKFNQGKIFK (160 aa)) folds into the EF-1-gamma C-terminal domain. Position 294 is a phosphoserine (S294).

In terms of assembly, interacts with microtubules. May interact with BicDR; the interaction is probably indirect. Interacts (via C-terminus) with Doa; the interaction is probably direct, is transient and leads to phosphorylation of eEF1gamma by Doa. EF-1 is composed of four subunits: alpha, beta, delta, and gamma. Phosphorylated on Ser-294 by LAMMER kinases, including Doa. Phosphorylation on Ser-294 by Doa is required for negative regulation of microtubule-based transport.

Its subcellular location is the cytoplasm. The protein resides in the nucleus. It localises to the cytoskeleton. Its function is as follows. Microtubule binding protein involved in regulation of microtubule-based transport. Probably plays a role in anchoring the EF-1 complex to other cellular components. Probably involved in formation and/or development of mechanosensory organs during metamorphosis. Required for cellular and organismal viability. Not essential for the innate immune response to bacterial infection. The protein is Elongation factor 1-gamma of Drosophila melanogaster (Fruit fly).